A 252-amino-acid chain; its full sequence is Phosphoglycolate phosphatase (252 aa).

The active-site Nucleophile is the Asp-13. Mg(2+) is bound by residues Asp-13, Asp-15, and Asp-192.

The protein belongs to the HAD-like hydrolase superfamily. CbbY/CbbZ/Gph/YieH family. In terms of assembly, monomer. Mg(2+) serves as cofactor. It depends on chloride as a cofactor.

The enzyme catalyses 2-phosphoglycolate + H2O = glycolate + phosphate. Its pathway is organic acid metabolism; glycolate biosynthesis; glycolate from 2-phosphoglycolate: step 1/1. Specifically catalyzes the dephosphorylation of 2-phosphoglycolate. Is involved in the dissimilation of the intracellular 2-phosphoglycolate formed during the DNA repair of 3'-phosphoglycolate ends, a major class of DNA lesions induced by oxidative stress. The polypeptide is Phosphoglycolate phosphatase (Shigella sonnei (strain Ss046)).